The primary structure comprises 328 residues: Malate dehydrogenase (328 aa).

12-18 serves as a coordination point for NAD(+); it reads GAAGQIG. The substrate site is built by arginine 95 and arginine 101. Residues asparagine 108, glutamine 115, and 132–134 contribute to the NAD(+) site; that span reads VGN. Substrate-binding residues include asparagine 134 and arginine 165. Catalysis depends on histidine 190, which acts as the Proton acceptor.

This sequence belongs to the LDH/MDH superfamily. MDH type 2 family.

The enzyme catalyses (S)-malate + NAD(+) = oxaloacetate + NADH + H(+). Functionally, catalyzes the reversible oxidation of malate to oxaloacetate. This is Malate dehydrogenase from Acidovorax ebreus (strain TPSY) (Diaphorobacter sp. (strain TPSY)).